Here is a 245-residue protein sequence, read N- to C-terminus: tRNA1(Val) (adenine(37)-N6)-methyltransferase (245 aa).

Belongs to the methyltransferase superfamily. tRNA (adenine-N(6)-)-methyltransferase family.

The protein localises to the cytoplasm. It carries out the reaction adenosine(37) in tRNA1(Val) + S-adenosyl-L-methionine = N(6)-methyladenosine(37) in tRNA1(Val) + S-adenosyl-L-homocysteine + H(+). Functionally, specifically methylates the adenine in position 37 of tRNA(1)(Val) (anticodon cmo5UAC). In Klebsiella pneumoniae subsp. pneumoniae (strain ATCC 700721 / MGH 78578), this protein is tRNA1(Val) (adenine(37)-N6)-methyltransferase.